Here is a 159-residue protein sequence, read N- to C-terminus: MSDNEALDVEDYAQAGSGASLTFPIQCSALRKNGFVVIKGFPCKIVDMSTSKTGKHGHAKVNITAIDIFTGKKYEEICPSTHNIDVPNVSRKEYTVMDVQDGYLSLLDAGGEVKEDLALPEDDIGKEITQMLKEGKEPLVSVISALGKEGVVSVKVSNN.

At K55 the chain carries Hypusine.

This sequence belongs to the eIF-5A family. Post-translationally, lys-55 undergoes hypusination, a unique post-translational modification that consists in the addition of a butylamino group from spermidine to lysine side chain, leading to the formation of the unusual amino acid hypusine. eIF-5As are the only known proteins to undergo this modification, which is essential for their function.

The protein resides in the cytoplasm. Translation factor that promotes translation elongation and termination, particularly upon ribosome stalling at specific amino acid sequence contexts. Binds between the exit (E) and peptidyl (P) site of the ribosome and promotes rescue of stalled ribosome: specifically required for efficient translation of polyproline-containing peptides as well as other motifs that stall the ribosome. Acts as a ribosome quality control (RQC) cofactor by joining the RQC complex to facilitate peptidyl transfer during CAT tailing step. The protein is Eukaryotic translation initiation factor 5A (eif5a) of Dictyostelium discoideum (Social amoeba).